The chain runs to 379 residues: MTAIRYEFIKTCKQTGARLGRVHTPHGSFDTPTFMPVGTLATVKTMSPEELKAMDSGIILSNTYHLWLRPGHEIIREAGGLHKFMNWDRAILTDSGGFQVFSLSDFRRIEEEGVHFRNHLNGDKLFLSPEKAMEIQNALGSDIMMAFDECPPFPATFEYMKKSVERTSRWAERCLKAHERPQDQGLFGIVQGGEYEELRRQSAKDLVSMDFPGYAVGGLSVGEPKDIMNRVLEFTTPLLPDNKPRYLMGVGSPDSLIDGAIRGIDMFDCVLPTRIARNGTCMTSEGRLVVKNAKFARDFGPLDPNCDCYTCKNYSRAYIRHLMKCDETFGIRLTSYHNLHFLLNLMEQVRQAIREDRLGDFREEFFEQYGFNKPNAKNF.

D94 acts as the Proton acceptor in catalysis. Residues 94 to 98, D148, Q191, and G218 contribute to the substrate site; that span reads DSGGF. Residues 249–255 are RNA binding; the sequence is GVGSPDS. Catalysis depends on D268, which acts as the Nucleophile. The interval 273 to 277 is RNA binding; important for wobble base 34 recognition; it reads TRIAR. Zn(2+)-binding residues include C306, C308, C311, and H337.

The protein belongs to the queuine tRNA-ribosyltransferase family. As to quaternary structure, homodimer. Within each dimer, one monomer is responsible for RNA recognition and catalysis, while the other monomer binds to the replacement base PreQ1. Requires Zn(2+) as cofactor.

The catalysed reaction is 7-aminomethyl-7-carbaguanine + guanosine(34) in tRNA = 7-aminomethyl-7-carbaguanosine(34) in tRNA + guanine. Its pathway is tRNA modification; tRNA-queuosine biosynthesis. Functionally, catalyzes the base-exchange of a guanine (G) residue with the queuine precursor 7-aminomethyl-7-deazaguanine (PreQ1) at position 34 (anticodon wobble position) in tRNAs with GU(N) anticodons (tRNA-Asp, -Asn, -His and -Tyr). Catalysis occurs through a double-displacement mechanism. The nucleophile active site attacks the C1' of nucleotide 34 to detach the guanine base from the RNA, forming a covalent enzyme-RNA intermediate. The proton acceptor active site deprotonates the incoming PreQ1, allowing a nucleophilic attack on the C1' of the ribose to form the product. After dissociation, two additional enzymatic reactions on the tRNA convert PreQ1 to queuine (Q), resulting in the hypermodified nucleoside queuosine (7-(((4,5-cis-dihydroxy-2-cyclopenten-1-yl)amino)methyl)-7-deazaguanosine). In Bacillus cereus (strain G9842), this protein is Queuine tRNA-ribosyltransferase.